Consider the following 303-residue polypeptide: MYYGFDIGGTKIALGVFDSTRRLQWEKRVPTPHASYGAFLDAVCELVAEADQRFGVKGSVGIGIPGMPETEDGTLYAANVPAASGKPLRADLSARLDRDVRLDNDANCFALSEAWDDEFTQYPLVMGLILGTGVGGGLVLNGKPITGQSYITGEFGHMRLPVDALTLMGFDFPLRRCGCGQMGCIENYLSGRGFAWLYQHYYHQSLQAPEIIALWEQGDEQAHAHVERYLDLLAVCLGNILTIVDPDLLVIGGGLSNFTAITTQLAERLPRHLLPVARAPRIERARHGDAGGMRGAAFLHLTD.

ATP contacts are provided by residues 4-11 (GFDIGGTK) and 133-140 (GVGGGLVL). Zn(2+) contacts are provided by His157, Cys177, Cys179, and Cys184.

It belongs to the ROK (NagC/XylR) family. NagK subfamily.

It catalyses the reaction N-acetyl-D-glucosamine + ATP = N-acetyl-D-glucosamine 6-phosphate + ADP + H(+). It participates in cell wall biogenesis; peptidoglycan recycling. Catalyzes the phosphorylation of N-acetyl-D-glucosamine (GlcNAc) derived from cell-wall degradation, yielding GlcNAc-6-P. This chain is N-acetyl-D-glucosamine kinase, found in Salmonella paratyphi A (strain ATCC 9150 / SARB42).